We begin with the raw amino-acid sequence, 317 residues long: Melanocyte-stimulating hormone receptor (317 aa).

At 1-37 (MAVQGSQRRLLGSLNSTPTAIPQLGLAANQTGARCLE) the chain is on the extracellular side. An N-linked (GlcNAc...) asparagine glycan is attached at Asn29. The chain crosses the membrane as a helical span at residues 38-63 (VSIPDGLFLSLGLVSLVENMLVVATI). The Cytoplasmic segment spans residues 64 to 72 (AKNRNLHSP). Residues 73–93 (MYCFICCLALSDLLVSGSNVL) form a helical membrane-spanning segment. Over 94–118 (ETAVILLLEAGALVARAAVLQQVDN) the chain is Extracellular. A helical transmembrane segment spans residues 119–140 (VIDVITCSSMLSSLCFLGAIAV). At 141-163 (DRYISIFYALRYHSIVTLPRARR) the chain is on the cytoplasmic side. A helical membrane pass occupies residues 164–183 (AIAAIWVASVLFSTLFIAYC). Over 184-191 (DHTAVLLC) the chain is Extracellular. Residues 192–211 (LVVFFLAVLVLMAVLYVHML) form a helical membrane-spanning segment. At 212 to 240 (ARACQHAQGIARLHKRQRPVHQGFGLKGA) the chain is on the cytoplasmic side. A helical membrane pass occupies residues 241 to 266 (VTLTILLGIFFLCWGPFFLHLTLIVL). Residues 267–279 (CPEHPTCGCIFKN) lie on the Extracellular side of the membrane. Residues 280–300 (FNLFLALIICNAIIDPLIYAF) form a helical membrane-spanning segment. The Cytoplasmic portion of the chain corresponds to 301–317 (HSQELRRTLKEVLTCSW). The S-palmitoyl cysteine moiety is linked to residue Cys315.

It belongs to the G-protein coupled receptor 1 family. As to quaternary structure, interacts with MGRN1, but does not undergo MGRN1-mediated ubiquitination; this interaction competes with GNAS-binding and thus inhibits agonist-induced cAMP production. Interacts with OPN3; the interaction results in a decrease in MC1R-mediated cAMP signaling and ultimately a decrease in melanin production in melanocytes.

The protein resides in the cell membrane. In terms of biological role, receptor for MSH (alpha, beta and gamma) and ACTH. The activity of this receptor is mediated by G proteins which activate adenylate cyclase. Mediates melanogenesis, the production of eumelanin (black/brown) and phaeomelanin (red/yellow), via regulation of cAMP signaling in melanocytes. The polypeptide is Melanocyte-stimulating hormone receptor (MC1R) (Pan troglodytes (Chimpanzee)).